The chain runs to 2067 residues: Nuclear receptor coactivator 6 (2067 aa).

Residues 1-932 (MVLDDLPNFE…PPRKKKNCHQ (932 aa)) are TBP/GTF2A-binding region. Residues 1–1060 (MVLDDLPNFE…LPVSQNVHPP (1060 aa)) form a CREBBP-binding region region. Positions 1–1314 (MVLDDLPNFE…QAHKLDSVVV (1314 aa)) are NCOA1-binding region. Arg-95 carries the post-translational modification Asymmetric dimethylarginine. 2 disordered regions span residues 181-253 (AVMT…RQMN) and 293-548 (TRPL…PGNS). The segment covering 293-304 (TRPLQQHQQQPQ) has biased composition (low complexity). Polar residues-rich tracts occupy residues 338–347 (SLGTMTTNQG), 357–372 (MQAQ…TVQT), 383–405 (GSQQ…QFTA), 421–457 (PLQQ…QQQM), 465–506 (NPLS…QGPQ), and 526–548 (GQAN…PGNS). Residues 777–931 (VNNSPSQVMG…KPPRKKKNCH (155 aa)) are NCOA6IP-binding region. Ser-888 is modified (phosphoserine). Residues 891-895 (LVNLL) carry the LXXLL motif 1 motif. 5 disordered regions span residues 903–1279 (HFGV…QGLN), 1313–1358 (VVNS…APKL), 1424–1481 (NIPQ…EENK), 1497–1581 (QLLD…IPPV), and 1769–1822 (LNPD…GKGK). A compositionally biased stretch (low complexity) spans 907–916 (NNKQNNTNAN). Over residues 917-929 (KPKKKKPPRKKKN) the composition is skewed to basic residues. Residues 984–996 (QRPLPQMPPQLMQ) are compositionally biased toward low complexity. Residues 999-1024 (APPPQPPQQQPQPQLPQQQQPPPPSQ) are compositionally biased toward pro residues. The segment covering 1025-1044 (PQSQQQQQQQQMMMMLMMQQ) has biased composition (low complexity). Residues Arg-1050 and Arg-1061 each carry the asymmetric dimethylarginine modification. Polar residues predominate over residues 1066–1078 (PDSQRMPVQQSGN). The residue at position 1099 (Arg-1099) is an Asymmetric dimethylarginine. Positions 1103–1123 (SVNTPMGSNSRKMVYQENPQN) are enriched in polar residues. Residues 1124-1137 (SSSSPLGEMSSLPE) are compositionally biased toward low complexity. Composition is skewed to polar residues over residues 1152–1165 (NMPS…NQLM), 1176–1194 (LSAT…SLPS), and 1205–1217 (APTQ…TPNR). The segment covering 1222 to 1235 (PYYPQTPNNRPPST) has biased composition (pro residues). A compositionally biased stretch (polar residues) spans 1313-1324 (VVNSGKQSNPGT). Low complexity predominate over residues 1326-1349 (KRASPSNSRRSSPGSSRKTTPSPG). The span at 1424–1435 (NIPQDSDCQNAQ) shows a compositional bias: polar residues. Positions 1495 to 1499 (LSQLL) match the LXXLL motif 2 motif. The segment covering 1545–1562 (EPSTSLSSPHSSEPCSTL) has biased composition (low complexity). Residues 1644–2067 (SEGQSAAQSN…AVQSKRRKSK (424 aa)) are EP300/CRSP3-binding region. The segment covering 1775–1805 (SPQTNTSADQSTLPPSQPTTVVSSLLTNSPG) has biased composition (polar residues). Over residues 1806 to 1818 (SSANRRSPVSSSK) the composition is skewed to low complexity. N6-acetyllysine is present on residues Lys-1822 and Lys-1825. Disordered stretches follow at residues 1840 to 1911 (GSLE…LPGG) and 1957 to 2067 (VGSH…RKSK). Positions 1871-1883 (EQCSTELDSKTPT) are enriched in polar residues. Positions 1892–1904 (MTSSPMAPSSTST) are enriched in low complexity. Positions 2005-2014 (EPKEIVEKSK) are enriched in basic and acidic residues. Ser-2022 is subject to Phosphoserine.

In terms of assembly, monomer and homodimer. Interacts in vitro with the basal transcription factors GTF2A and TBP, suggesting an autonomous transactivation function. Interacts with NCOA1, CRSP3, RBM14, the histone acetyltransferase proteins EP300 and CREBBP, and with methyltransferase proteins NCOA6IP and PRMT2. Interacts with RBM39. Component of the MLL2/3 complex (also named ASCOM complex), at least composed of KMT2D/MLL2 or KMT2C/MLL3, ASH2L, RBBP5, WDR5, NCOA6, DPY30, KDM6A, PAXIP1/PTIP, PAGR1 and alpha- and beta-tubulin. Interacts with ZNF335; may enhance ligand-dependent transcriptional activation by nuclear hormone receptors. In terms of processing, phosphorylated. As to expression, widely expressed. High expression in testis and weak expression in small intestine.

It localises to the nucleus. Its function is as follows. Nuclear receptor coactivator that directly binds nuclear receptors and stimulates the transcriptional activities in a hormone-dependent fashion. Coactivates expression in an agonist- and AF2-dependent manner. Involved in the coactivation of different nuclear receptors, such as for steroids (GR and ERs), retinoids (RARs and RXRs), thyroid hormone (TRs), vitamin D3 (VDR) and prostanoids (PPARs). Probably functions as a general coactivator, rather than just a nuclear receptor coactivator. May also be involved in the coactivation of the NF-kappa-B pathway. May coactivate expression via a remodeling of chromatin and its interaction with histone acetyltransferase proteins. Involved in placental, cardiac, hepatic and embryonic development. The polypeptide is Nuclear receptor coactivator 6 (Ncoa6) (Mus musculus (Mouse)).